The primary structure comprises 466 residues: Ribosomal protein uS12 methylthiotransferase RimO (466 aa).

The MTTase N-terminal domain maps to 31–141 (PTIGMVSLGC…VLDAVHGAVP (111 aa)). 6 residues coordinate [4Fe-4S] cluster: C40, C76, C105, C172, C176, and C179. Residues 158 to 397 (LTPRHYSYLK…MAKAQAISEA (240 aa)) form the Radical SAM core domain. A TRAM domain is found at 400–466 (AARVGQVIEV…GEYDLWGRLR (67 aa)).

This sequence belongs to the methylthiotransferase family. RimO subfamily. Requires [4Fe-4S] cluster as cofactor.

It is found in the cytoplasm. It catalyses the reaction L-aspartate(89)-[ribosomal protein uS12]-hydrogen + (sulfur carrier)-SH + AH2 + 2 S-adenosyl-L-methionine = 3-methylsulfanyl-L-aspartate(89)-[ribosomal protein uS12]-hydrogen + (sulfur carrier)-H + 5'-deoxyadenosine + L-methionine + A + S-adenosyl-L-homocysteine + 2 H(+). In terms of biological role, catalyzes the methylthiolation of an aspartic acid residue of ribosomal protein uS12. The polypeptide is Ribosomal protein uS12 methylthiotransferase RimO (Ruegeria pomeroyi (strain ATCC 700808 / DSM 15171 / DSS-3) (Silicibacter pomeroyi)).